Reading from the N-terminus, the 50-residue chain is Bacteriocin BacSp222 (50 aa).

The residue at position 1 (M1) is an N-formylmethionine.

The protein resides in the secreted. Its function is as follows. Has bacteriolytic activity against Gram-positive bacteria B.subtilis, L.lactis and M.luteus and several species from genus Staphylococcus including methicillin-resistant S.aureus, with MIC values ranging from 0.11 uM to 7.8 uM. Has no activity against Gram-negative bacteria or fungi. In vitro, has a dose-dependent cytolytic effect on eukaryotic cells. In Staphylococcus pseudintermedius, this protein is Bacteriocin BacSp222.